A 603-amino-acid chain; its full sequence is MASHSSVSYRSVRTGGTSAMIGSSGYGGSSSSRAMGLGMGAAGLSMGGGSFRVGSAGIGGMGISSGIGGMGISSRAGGMSAYGGAASGGAGGFVSGGVPMLGYGGGAGGFIGGVSPGIMASPAFTAGRAITSAGMSGVVGTLGPAGGMVPSLVSRDEVKNILGTLNQRLASYVDKVRQLTIENETMEEELKNLTGGVPMSPDSTVNLENVETQVTEMLTEVSNLTLERVRLEIDVDHLRATADEIKSKYEFELGVRMQLETDIANMKRDLEAANDMRVDLDSKFNFLTEELTFQRKTQMEELNTLKQQFGRLGPVQTSVIELDNVKSVNLTDALNVMREEYQQVVTKNVQEAETYCKMQIDQIQGISTQTTEQISILDKEINTLEKELQPLNVEYQRLLTTYQTLGDRLTDLQNRESIDLVQFQNTYTRYEQEIEGNQVDLQRQLVTYQQLLDVKTALDAEIATYKKLLEGQELMVRTAMADDFAHATVVRSGTLGGASSSSVGYGASSTTLGAISGGYSTGGGASYSAGAGGASYSAGAGGASYGVGGGYSGGSSAMMEGSSSGGHSMYSSSSMKRSSSKSASASAGGYGTSGHDSTIILQQ.

Residues 1–191 form a head region; the sequence is MASHSSVSYR…ENETMEEELK (191 aa). The IF rod domain occupies 158 to 476; it reads VKNILGTLNQ…KLLEGQELMV (319 aa). The segment at 193-227 is coil 1A; sequence LTGGVPMSPDSTVNLENVETQVTEMLTEVSNLTLE. The segment at 228 to 240 is linker 1; the sequence is RVRLEIDVDHLRA. The interval 241–341 is coil 1B; sequence TADEIKSKYE…DALNVMREEY (101 aa). The interval 342 to 362 is linker 12; sequence QQVVTKNVQEAETYCKMQIDQ. The segment at 363-381 is coil 2A; that stretch reads IQGISTQTTEQISILDKEI. The tract at residues 382 to 389 is linker 2; it reads NTLEKELQ. Residues 390–510 are coil 2B; it reads PLNVEYQRLL…SSVGYGASST (121 aa). The segment at 511-603 is tail; the sequence is TLGAISGGYS…GHDSTIILQQ (93 aa). Over residues 562–587 the composition is skewed to low complexity; the sequence is SSSGGHSMYSSSSMKRSSSKSASASA. The tract at residues 562–603 is disordered; the sequence is SSSGGHSMYSSSSMKRSSSKSASASAGGYGTSGHDSTIILQQ.

This sequence belongs to the intermediate filament family. In terms of assembly, coiled-coil heterodimer of an alpha and a gamma subunit. Assemble into 10 nm filaments. Forms a massive, conical, intermediate filament biopolymer of approximately 60 cm.

The protein resides in the secreted. The protein localises to the extracellular space. In terms of biological role, released extracellularly into seawater and provides physical and biological defense against invasive organism by modulation of the viscoelastic properties of mucus. In Eptatretus stoutii (Pacific hagfish), this protein is Thread biopolymer filament subunit gamma.